A 298-amino-acid chain; its full sequence is Bifunctional protein FolD (298 aa).

NADP(+) is bound by residues 165 to 167, Ser194, and Ile235; that span reads GRG.

Belongs to the tetrahydrofolate dehydrogenase/cyclohydrolase family. In terms of assembly, homodimer.

It catalyses the reaction (6R)-5,10-methylene-5,6,7,8-tetrahydrofolate + NADP(+) = (6R)-5,10-methenyltetrahydrofolate + NADPH. The catalysed reaction is (6R)-5,10-methenyltetrahydrofolate + H2O = (6R)-10-formyltetrahydrofolate + H(+). Its pathway is one-carbon metabolism; tetrahydrofolate interconversion. Its function is as follows. Catalyzes the oxidation of 5,10-methylenetetrahydrofolate to 5,10-methenyltetrahydrofolate and then the hydrolysis of 5,10-methenyltetrahydrofolate to 10-formyltetrahydrofolate. The protein is Bifunctional protein FolD of Amoebophilus asiaticus (strain 5a2).